The sequence spans 297 residues: Aspartate carbamoyltransferase catalytic subunit (297 aa).

Carbamoyl phosphate-binding residues include Arg-48 and Thr-49. Residue Lys-76 coordinates L-aspartate. Carbamoyl phosphate-binding residues include Arg-98, His-129, and Gln-132. The L-aspartate site is built by Arg-162 and Arg-214. Ala-257 and Pro-258 together coordinate carbamoyl phosphate.

It belongs to the aspartate/ornithine carbamoyltransferase superfamily. ATCase family. Heterododecamer (2C3:3R2) of six catalytic PyrB chains organized as two trimers (C3), and six regulatory PyrI chains organized as three dimers (R2).

The catalysed reaction is carbamoyl phosphate + L-aspartate = N-carbamoyl-L-aspartate + phosphate + H(+). It functions in the pathway pyrimidine metabolism; UMP biosynthesis via de novo pathway; (S)-dihydroorotate from bicarbonate: step 2/3. In terms of biological role, catalyzes the condensation of carbamoyl phosphate and aspartate to form carbamoyl aspartate and inorganic phosphate, the committed step in the de novo pyrimidine nucleotide biosynthesis pathway. This is Aspartate carbamoyltransferase catalytic subunit from Leuconostoc mesenteroides subsp. mesenteroides (strain ATCC 8293 / DSM 20343 / BCRC 11652 / CCM 1803 / JCM 6124 / NCDO 523 / NBRC 100496 / NCIMB 8023 / NCTC 12954 / NRRL B-1118 / 37Y).